Reading from the N-terminus, the 313-residue chain is Ribosomal RNA small subunit methyltransferase H (313 aa).

Residues 35 to 37 (GGH), D55, F79, D101, and Q108 each bind S-adenosyl-L-methionine.

This sequence belongs to the methyltransferase superfamily. RsmH family.

It localises to the cytoplasm. It catalyses the reaction cytidine(1402) in 16S rRNA + S-adenosyl-L-methionine = N(4)-methylcytidine(1402) in 16S rRNA + S-adenosyl-L-homocysteine + H(+). In terms of biological role, specifically methylates the N4 position of cytidine in position 1402 (C1402) of 16S rRNA. The polypeptide is Ribosomal RNA small subunit methyltransferase H (Salmonella arizonae (strain ATCC BAA-731 / CDC346-86 / RSK2980)).